The following is a 449-amino-acid chain: Allantoinase (449 aa).

Histidine 61, histidine 63, lysine 148, histidine 184, histidine 240, and aspartate 313 together coordinate Zn(2+). At lysine 148 the chain carries N6-carboxylysine.

It belongs to the metallo-dependent hydrolases superfamily. Allantoinase family. Homotetramer. Zn(2+) is required as a cofactor. In terms of processing, carboxylation allows a single lysine to coordinate two zinc ions.

It carries out the reaction (S)-allantoin + H2O = allantoate + H(+). It participates in nitrogen metabolism; (S)-allantoin degradation; allantoate from (S)-allantoin: step 1/1. Its function is as follows. Catalyzes the conversion of allantoin (5-ureidohydantoin) to allantoic acid by hydrolytic cleavage of the five-member hydantoin ring. This chain is Allantoinase, found in Desulfitobacterium hafniense (strain DSM 10664 / DCB-2).